The following is an 83-amino-acid chain: Cytochrome b559 subunit alpha (83 aa).

A helical transmembrane segment spans residues 21–35 (VIHSITIPSLFIAGW). Residue His23 coordinates heme.

The protein belongs to the PsbE/PsbF family. Heterodimer of an alpha subunit and a beta subunit. PSII is composed of 1 copy each of membrane proteins PsbA, PsbB, PsbC, PsbD, PsbE, PsbF, PsbH, PsbI, PsbJ, PsbK, PsbL, PsbM, PsbT, PsbX, PsbY, PsbZ, Psb30/Ycf12, at least 3 peripheral proteins of the oxygen-evolving complex and a large number of cofactors. It forms dimeric complexes. Heme b is required as a cofactor.

The protein resides in the plastid. It localises to the chloroplast thylakoid membrane. Its function is as follows. This b-type cytochrome is tightly associated with the reaction center of photosystem II (PSII). PSII is a light-driven water:plastoquinone oxidoreductase that uses light energy to abstract electrons from H(2)O, generating O(2) and a proton gradient subsequently used for ATP formation. It consists of a core antenna complex that captures photons, and an electron transfer chain that converts photonic excitation into a charge separation. This is Cytochrome b559 subunit alpha from Agrostis stolonifera (Creeping bentgrass).